We begin with the raw amino-acid sequence, 226 residues long: Tyramine N-feruloyltransferase 10/30 (226 aa).

The interval 29–45 (HIYKLFYQIHEYHNYTH) is important in binding site and for catalytic activity. The region spanning 72 to 222 (VLLLEVSPTP…VGDALQKYAD (151 aa)) is the N-acetyltransferase domain.

Belongs to the acetyltransferase family. Homodimer.

It is found in the cytoplasm. The catalysed reaction is tyramine + (E)-feruloyl-CoA = N-[(E)-feruloyl]tyramine + CoA + H(+). Its activity is regulated as follows. Inhibited by (2-hydroxyphenyl)amino sulfinyl acetic acid 1,1-dimethylethyl ester, by DEPC and by N-ethylmaleimide. Its function is as follows. Synthesizes amides which are involved in stress response in the cell wall. Catalyzes the synthesis of hydroxycinnamic acid amides from hydroxycinnamoyl-CoA thioesters and various hydroxyphenylethylamines such as 4-coumaroyl-CoA and sinapoyl-CoA. The polypeptide is Tyramine N-feruloyltransferase 10/30 (THT10) (Nicotiana tabacum (Common tobacco)).